The sequence spans 271 residues: Chorismate dehydratase (271 aa).

The protein belongs to the MqnA/MqnD family. MqnA subfamily.

It catalyses the reaction chorismate = 3-[(1-carboxyvinyl)-oxy]benzoate + H2O. Its pathway is quinol/quinone metabolism; menaquinone biosynthesis. In terms of biological role, catalyzes the dehydration of chorismate into 3-[(1-carboxyvinyl)oxy]benzoate, a step in the biosynthesis of menaquinone (MK, vitamin K2). The sequence is that of Chorismate dehydratase from Thermus thermophilus (strain ATCC 27634 / DSM 579 / HB8).